Reading from the N-terminus, the 128-residue chain is Light-regulated protein, chloroplastic (128 aa).

Repeat copies occupy residues 58–72 (VFPM…GEAC) and 111–125 (VFPE…GEFC). The 2 X 15 AA approximate repeats stretch occupies residues 58-125 (VFPMEACDLI…ACDDLGGEFC (68 aa)).

Component of high molecular weight thylakoid LFNRs-containing protein complexes containing LIR1, LFNR1, LFNR2, TIC62 and TROL proteins. Interacts directly with LFNR1 and LFNR2; LIR1 increases the affinity of LFNR1 and LFNR2 for TIC62 and subsequent thylakoid relocalization. In terms of processing, may form interchain disulfide bonds with LFNR1 and LFNR2.

It localises to the plastid. The protein resides in the chloroplast thylakoid membrane. Its subcellular location is the chloroplast envelope. The protein localises to the chloroplast stroma. Thylakoid-determinant subunit of high molecular weight LFNRs-containing protein complexes. The protein is Light-regulated protein, chloroplastic (LIR1) of Oryza sativa subsp. japonica (Rice).